Here is a 313-residue protein sequence, read N- to C-terminus: D-apiose import binding protein (313 aa).

Positions 1 to 26 (MKLTRRLTLAAFASALALGTAMPAFA) are cleaved as a signal peptide. D-apiofuranose is bound by residues Asn39, 115-116 (DR), 162-164 (DTN), Arg168, Asn218, Asp243, and Gln263.

It belongs to the bacterial solute-binding protein 2 family.

Its subcellular location is the periplasm. Part of an ABC transporter complex involved in D-apiose import. Binds D-apiose, D-ribose and D-ribulose. The sequence is that of D-apiose import binding protein from Rhizobium etli (strain ATCC 51251 / DSM 11541 / JCM 21823 / NBRC 15573 / CFN 42).